A 271-amino-acid chain; its full sequence is Protein phosphatase 1 regulatory subunit 3B-B (271 aa).

A PP1-binding motif motif is present at residues R56–F59. Residues R119–V227 enclose the CBM21 domain.

As to quaternary structure, interacts with glycogen, PPP1CC catalytic subunit of PP1 and PYGL. Associates with glycogen particles. Forms complexes with debranching enzyme, glycogen phosphorylase, glycogen synthase and phosphorylase kinase which is necessary for its regulation of PP1 activity.

In terms of biological role, acts as a glycogen-targeting subunit for phosphatase PP1. Facilitates interaction of the PP1 with enzymes of the glycogen metabolism and regulates its activity. Suppresses the rate at which PP1 dephosphorylates (inactivates) glycogen phosphorylase and enhances the rate at which it activates glycogen synthase and therefore limits glycogen breakdown. This chain is Protein phosphatase 1 regulatory subunit 3B-B (ppp1r3b-b), found in Xenopus laevis (African clawed frog).